The sequence spans 188 residues: UPF0314 protein Sala_3154 (188 aa).

3 consecutive transmembrane segments (helical) span residues 8–28, 57–77, and 143–163; these read TGWL…IFMG, WYSF…RWIM, and MRWW…LWTI.

The protein belongs to the UPF0314 family.

Its subcellular location is the cell membrane. This Sphingopyxis alaskensis (strain DSM 13593 / LMG 18877 / RB2256) (Sphingomonas alaskensis) protein is UPF0314 protein Sala_3154.